The primary structure comprises 358 residues: Adenosine deaminase (358 aa).

2 residues coordinate Zn(2+): H14 and H16. H16, D18, and G183 together coordinate substrate. H212 is a binding site for Zn(2+). Catalysis depends on E215, which acts as the Proton donor. Zn(2+) is bound at residue D294. D295 contributes to the substrate binding site.

It belongs to the metallo-dependent hydrolases superfamily. Adenosine and AMP deaminases family. Zn(2+) is required as a cofactor.

It is found in the cell membrane. Its subcellular location is the cell junction. It localises to the cytoplasmic vesicle lumen. The protein resides in the cytoplasm. The protein localises to the lysosome. It carries out the reaction adenosine + H2O + H(+) = inosine + NH4(+). The enzyme catalyses 2'-deoxyadenosine + H2O + H(+) = 2'-deoxyinosine + NH4(+). Its function is as follows. Catalyzes the hydrolytic deamination of adenosine and 2-deoxyadenosine. Plays an important role in purine metabolism and in adenosine homeostasis. Modulates signaling by extracellular adenosine, and so contributes indirectly to cellular signaling events. May act as a positive regulator of T-cell coactivation. In Xenopus laevis (African clawed frog), this protein is Adenosine deaminase (ada).